The primary structure comprises 298 residues: UTP--glucose-1-phosphate uridylyltransferase (298 aa).

It belongs to the UDPGP type 2 family.

The catalysed reaction is alpha-D-glucose 1-phosphate + UTP + H(+) = UDP-alpha-D-glucose + diphosphate. Its pathway is carbohydrate metabolism; nucleotide-sugar metabolism. It functions in the pathway capsule biogenesis; capsule polysaccharide biosynthesis. This chain is UTP--glucose-1-phosphate uridylyltransferase (galF), found in Klebsiella pneumoniae.